The sequence spans 184 residues: ATP synthase subunit b, chloroplastic (184 aa).

Residues 27 to 49 (LATNLINLSVVFGVLIFFGKGVL) traverse the membrane as a helical segment.

The protein belongs to the ATPase B chain family. As to quaternary structure, F-type ATPases have 2 components, F(1) - the catalytic core - and F(0) - the membrane proton channel. F(1) has five subunits: alpha(3), beta(3), gamma(1), delta(1), epsilon(1). F(0) has four main subunits: a(1), b(1), b'(1) and c(10-14). The alpha and beta chains form an alternating ring which encloses part of the gamma chain. F(1) is attached to F(0) by a central stalk formed by the gamma and epsilon chains, while a peripheral stalk is formed by the delta, b and b' chains.

It is found in the plastid. The protein localises to the chloroplast thylakoid membrane. In terms of biological role, f(1)F(0) ATP synthase produces ATP from ADP in the presence of a proton or sodium gradient. F-type ATPases consist of two structural domains, F(1) containing the extramembraneous catalytic core and F(0) containing the membrane proton channel, linked together by a central stalk and a peripheral stalk. During catalysis, ATP synthesis in the catalytic domain of F(1) is coupled via a rotary mechanism of the central stalk subunits to proton translocation. Functionally, component of the F(0) channel, it forms part of the peripheral stalk, linking F(1) to F(0). The chain is ATP synthase subunit b, chloroplastic from Aethionema cordifolium (Lebanon stonecress).